Here is a 483-residue protein sequence, read N- to C-terminus: FAD-dependent oxidoreductase oblC (483 aa).

An N-terminal signal peptide occupies residues 1–21; it reads MRSVTSLVSFSACLLASSVTA. Residues N100, N137, N190, and N240 are each glycosylated (N-linked (GlcNAc...) asparagine).

The protein belongs to the beta-cyclopiazonate dehydrogenase family. FAD serves as cofactor.

The protein operates within secondary metabolite biosynthesis; terpenoid biosynthesis. Functionally, FAD-dependent oxidoreductase; part of the gene cluster that mediates the biosynthesis of the sesterterpenes ophiobolins, fungal phytotoxins with potential anti-cancer activities. The first step of the pathway is performed by the sesterterpene synthase oblA that possesses both prenyl transferase and terpene cyclase activity, converting isopentenyl diphosphate and dimethylallyl diphosphate into geranylfarnesyl diphosphate (GFPP) and further converting GFPP into ophiobolin F, respectively. Other sesterterpenoids (C(25) terpenoids) are found as minor products of oblA. The cytochrome P450 monooxygenase oblB then catalyzes a four-step oxidative transformation of ophiobolin F to yield ophiobolin C. The FAD-dependent oxidoreductase oblC might be involved in a later oxidation step that produces ophiobolin A. This chain is FAD-dependent oxidoreductase oblC, found in Cochliobolus heterostrophus (strain C5 / ATCC 48332 / race O) (Southern corn leaf blight fungus).